Consider the following 330-residue polypeptide: Deoxyhypusine hydroxylase (330 aa).

HEAT-like PBS-type repeat units follow at residues 57–83, 90–116, and 199–225; these read LKHE…VLRN, VRHE…YLSD, and ERYR…GFSG. Residues His-59, Glu-60, His-92, and Glu-93 each contribute to the Fe cation site. Positions 232, 233, 265, and 266 each coordinate Fe cation. Residues 263–289 form an HEAT-like PBS-type 4 repeat; it reads VRHEAAEALGGIATPEVLPPLKEWVAR.

This sequence belongs to the deoxyhypusine hydroxylase family. The cofactor is Fe(2+).

The protein resides in the cytoplasm. The protein localises to the nucleus. The catalysed reaction is [eIF5A protein]-deoxyhypusine + AH2 + O2 = [eIF5A protein]-hypusine + A + H2O. It functions in the pathway protein modification; eIF5A hypusination. Functionally, catalyzes the hydroxylation of the N(6)-(4-aminobutyl)-L-lysine intermediate to form hypusine, an essential post-translational modification only found in mature eIF-5A factor. The protein is Deoxyhypusine hydroxylase of Lentinula edodes (Shiitake mushroom).